Here is a 96-residue protein sequence, read N- to C-terminus: Aspartyl/glutamyl-tRNA(Asn/Gln) amidotransferase subunit C (96 aa).

It belongs to the GatC family. Heterotrimer of A, B and C subunits.

It carries out the reaction L-glutamyl-tRNA(Gln) + L-glutamine + ATP + H2O = L-glutaminyl-tRNA(Gln) + L-glutamate + ADP + phosphate + H(+). It catalyses the reaction L-aspartyl-tRNA(Asn) + L-glutamine + ATP + H2O = L-asparaginyl-tRNA(Asn) + L-glutamate + ADP + phosphate + 2 H(+). In terms of biological role, allows the formation of correctly charged Asn-tRNA(Asn) or Gln-tRNA(Gln) through the transamidation of misacylated Asp-tRNA(Asn) or Glu-tRNA(Gln) in organisms which lack either or both of asparaginyl-tRNA or glutaminyl-tRNA synthetases. The reaction takes place in the presence of glutamine and ATP through an activated phospho-Asp-tRNA(Asn) or phospho-Glu-tRNA(Gln). The sequence is that of Aspartyl/glutamyl-tRNA(Asn/Gln) amidotransferase subunit C from Sulfurimonas denitrificans (strain ATCC 33889 / DSM 1251) (Thiomicrospira denitrificans (strain ATCC 33889 / DSM 1251)).